The chain runs to 267 residues: MINNNMMNSQYMFDYPAINIDVRCHRLLSSVSYVAYNKFHTHDVSTYEHCEIPLEKLRLGFGRRNSLADFYSLGELPASWGPACYFSSVKPMMYTFQGMASDLSRFDLTSFSRKGLPNVLKALSWPLGIPDCEIFSICSDRFVRGLQTRDQLMSYILRMGDSHSLDECIVQAHKKILQEARRLGLSDEHYNGYDLFREIGSLVCLRLINAEPFDTASSGEALDVRTVIRSYRASDPSTGLTEYGNSLWTPIHSHVDENDESSSDSDF.

It belongs to the phlebovirus NS-S protein family.

The protein is Non-structural protein NS-S (NSS) of Homo sapiens (Human).